We begin with the raw amino-acid sequence, 175 residues long: Vesicle-associated membrane protein-associated protein SCS22 (175 aa).

One can recognise an MSP domain in the interval 1–125 (MRIVPEKLVF…DDIVFKKIKI (125 aa)). The Cytoplasmic segment spans residues 1–154 (MRIVPEKLVF…RAPSAGNGQS (154 aa)). The tract at residues 133 to 152 (RKPSGNHDAESARAPSAGNG) is disordered. A helical; Anchor for type IV membrane protein membrane pass occupies residues 155–175 (LSSRALLIITVIALLVGWIYY).

This sequence belongs to the VAMP-associated protein (VAP) (TC 9.B.17) family.

The protein localises to the membrane. In terms of biological role, targets proteins containing a FFAT motif to membranes. Involved in regulation of phospholipid metabolism. This Saccharomyces cerevisiae (strain ATCC 204508 / S288c) (Baker's yeast) protein is Vesicle-associated membrane protein-associated protein SCS22 (SCS22).